The chain runs to 114 residues: Putative protein TfaS (114 aa).

It belongs to the tfa family.

This chain is Putative protein TfaS (tfaS), found in Escherichia coli (strain K12).